Reading from the N-terminus, the 382-residue chain is Cholinephosphotransferase 1 (382 aa).

Residues 1-51 (MPQCECPEPLSAVQLKRLEEHKYSAAGRSLFEPPCQIYWNWLVQQIPTWVA) lie on the Cytoplasmic side of the membrane. Residues 52–72 (PNTLTTIGLVINVITTVILVY) traverse the membrane as a helical segment. Asn-53 serves as a coordination point for CDP-choline. The Lumenal segment spans residues 73–82 (YSPTATEEVP). A helical transmembrane segment spans residues 83–107 (GWAFFLSALGLFIYQSLDAIDGKQA). The Mg(2+) site is built by Asp-100 and Asp-103. CDP-choline is bound at residue Arg-108. Over 108 to 114 (RRTNSSS) the chain is Cytoplasmic. The chain crosses the membrane as a helical span at residues 115–139 (ALGELFDHGCDAVSTVFVAVGTCIC). Residue Asp-121 participates in Mg(2+) binding. His-122 (proton acceptor) is an active-site residue. Asp-125 lines the Mg(2+) pocket. Residues 140–149 (CGIGAYPNWM) lie on the Lumenal side of the membrane. Residues 150 to 168 (FFCGFVGMFMFFCAHWQTY) traverse the membrane as a helical segment. Residues 169-179 (VSGTLRFGLVD) are Cytoplasmic-facing. Residues 180-196 (VTEVQIAIIIMYLLTAF) traverse the membrane as a helical segment. The Lumenal segment spans residues 197–211 (TGVSFWEMRVPVLGV). Residues 212–237 (NLQTFPILGIIGGFLYSTYNYFFVIM) traverse the membrane as a helical segment. The Cytoplasmic portion of the chain corresponds to 238–254 (NGGVGKNGSTVADTSVL). Residues 255–270 (TPGLHIGLILTLAFII) form a helical membrane-spanning segment. Over 271–282 (FKKSSSHLFEHH) the chain is Lumenal. Residues 283 to 305 (PCLYVLTFGMVIAKISNKLVVAH) form a helical membrane-spanning segment. Over 306–318 (MTKSELHLQDTAF) the chain is Cytoplasmic. Residues 319–328 (IGPGLLFLNQ) traverse the membrane as a helical segment. At 329 to 335 (YFNSYID) the chain is on the lumenal side. Residues 336–365 (EHIVLWIAMVLSLVDLVRYCTAVCLQIASH) form a helical membrane-spanning segment. Topologically, residues 366 to 382 (LRIRVFSISPQGHAHKD) are cytoplasmic.

Belongs to the CDP-alcohol phosphatidyltransferase class-I family. Requires Mg(2+) as cofactor. It depends on Mn(2+) as a cofactor.

The protein resides in the golgi apparatus membrane. It catalyses the reaction CDP-choline + a 1,2-diacyl-sn-glycerol = a 1,2-diacyl-sn-glycero-3-phosphocholine + CMP + H(+). It carries out the reaction 1-octadecanoyl-2-(5Z,8Z,11Z,14Z-eicosatetraenoyl)-sn-glycerol + CDP-choline = 1-octadecanoyl-2-(5Z,8Z,11Z,14Z-eicosatetraenoyl)-sn-glycero-3-phosphocholine + CMP + H(+). The enzyme catalyses 1-hexadecanoyl-2-(9Z-octadecenoyl)-sn-glycerol + CDP-choline = 1-hexadecanoyl-2-(9Z-octadecenoyl)-sn-glycero-3-phosphocholine + CMP + H(+). The catalysed reaction is 1-hexadecanoyl-2-(4Z,7Z,10Z,13Z,16Z,19Z-docosahexaenoyl)-sn-glycerol + CDP-choline = 1-hexadecanoyl-2-(4Z,7Z,10Z,13Z,16Z,19Z-docosahexaenoyl)-sn-glycero-3-phosphocholine + CMP + H(+). It catalyses the reaction 1,2-dioctanoyl-sn-glycerol + CDP-choline = 1,2-dioctanoyl-sn-glycero-3-phosphocholine + CMP + H(+). It functions in the pathway phospholipid metabolism; phosphatidylcholine biosynthesis; phosphatidylcholine from phosphocholine: step 2/2. In terms of biological role, catalyzes the final step of de novo phosphatidylcholine (PC) synthesis, i.e. the transfer of choline phosphate from CDP-choline to the free hydroxyl of a diacylglycerol (DAG), producing a PC. It thereby plays a central role in the formation and maintenance of vesicular membranes. In Danio rerio (Zebrafish), this protein is Cholinephosphotransferase 1 (chpt1).